The chain runs to 454 residues: Aquaglyceroporin-9 (454 aa).

Topologically, residues 1-186 are cytoplasmic; it reads MEGGLRSPLN…RHTMREPFSE (186 aa). A helical transmembrane segment spans residues 187-207; sequence FFGVFILILFGDGVVAQVVLS. Residues 208–216 are Extracellular-facing; the sequence is SGERGSYQS. A helical transmembrane segment spans residues 217–237; the sequence is ISWGWGIGVMLGVYASGVSGA. Over 238–257 the chain is Cytoplasmic; sequence HINPAVTFANCIFRKFPWRK. Positions 240-242 match the NPA 1 motif; sequence NPA. The helical transmembrane segment at 258–278 threads the bilayer; that stretch reads FPIYMLAQVLGAMCASGVVYA. The Extracellular portion of the chain corresponds to 279 to 316; it reads NYKSAIDMFEGGNNIRTVGLNTSSAGIFCTYPAPFMTK. Asn299 is a glycosylation site (N-linked (GlcNAc...) asparagine). A helical membrane pass occupies residues 317–337; that stretch reads TGQFFSEFVASTILMFCIYAL. Residues 338 to 351 are Cytoplasmic-facing; it reads QDNGNLGSGNLTPL. Residues 352–372 form a helical membrane-spanning segment; that stretch reads GLFFVIFGIGACFGWETGYAI. An NPA 2 motif is present at residues 373-375; the sequence is NLA. At 373–403 the chain is on the extracellular side; that stretch reads NLARDFGPRLMSYFLGYGHEVWSAGNYYFWV. A helical transmembrane segment spans residues 404–424; the sequence is PMVAPFIGCLFGGWLYDVFIF. Residues 425-454 lie on the Cytoplasmic side of the membrane; that stretch reads TGESPINTPWMGLKRLMPGGLGSKKVDSKV.

It belongs to the MIP/aquaporin (TC 1.A.8) family.

The protein resides in the membrane. The enzyme catalyses H2O(in) = H2O(out). It carries out the reaction glycerol(in) = glycerol(out). Its function is as follows. Water channel required to facilitate the transport of water across membranes. May play a role in the vegetative growth and pathogenicity. The sequence is that of Aquaglyceroporin-9 from Botryotinia fuckeliana (strain B05.10) (Noble rot fungus).